The following is a 297-amino-acid chain: MATH domain and coiled-coil domain-containing protein At2g05420 (297 aa).

In terms of domain architecture, MATH spans 7–139; sequence SKTITWVIEN…NGELTLVAKV (133 aa). A coiled-coil region spans residues 239–281; it reads KLDWLEKKHGEIKEKKKKEEASLKRLQEMEKQIFNEAQIYKEK.

In Arabidopsis thaliana (Mouse-ear cress), this protein is MATH domain and coiled-coil domain-containing protein At2g05420.